Reading from the N-terminus, the 368-residue chain is MYKLFFRLVFKRMDPEQAHYLAFRWIRLAARIPVLRTFVAAALAPRFKELRTEAFGLRMHGPFGLAAGFDKNAVAVDGMSMLGFDHVEIGTVTGEPQPGNPKKRLFRLVPDRALINRMGFNNEGSAAVAARLAAREAVFRTVVGVNIGKTKVVPEEEAADDYVKSTERLARHADYLVVNVSSPNTPGLRNLQATEALRPLLSAVREAADRTVTERRVPLLVKIAPDLADDDIDAVADLAVELGLDGIIATNTTIAREGLGLKSEPTLVKETGGLSGAPLKARSLEVLSRLYARVGDRITLVGVGGIENAEDAWQRILAGATLVQGYSAFIYEGPFWGRAIHKGLAARLRTSPYATLADAVGADVRKSA.

Residues 67-71 (AGFDK) and T91 contribute to the FMN site. K71 lines the substrate pocket. Residue 116–120 (NRMGF) coordinates substrate. FMN contacts are provided by N146 and N179. Residue N179 participates in substrate binding. S182 acts as the Nucleophile in catalysis. Substrate is bound at residue N184. The FMN site is built by K222 and T250. A substrate-binding site is contributed by 251–252 (NT). FMN-binding positions include G276, G305, and 326-327 (YS).

This sequence belongs to the dihydroorotate dehydrogenase family. Type 2 subfamily. In terms of assembly, monomer. FMN is required as a cofactor.

The protein resides in the cell membrane. It catalyses the reaction (S)-dihydroorotate + a quinone = orotate + a quinol. The protein operates within pyrimidine metabolism; UMP biosynthesis via de novo pathway; orotate from (S)-dihydroorotate (quinone route): step 1/1. In terms of biological role, catalyzes the conversion of dihydroorotate to orotate with quinone as electron acceptor. The chain is Dihydroorotate dehydrogenase (quinone) from Streptomyces avermitilis (strain ATCC 31267 / DSM 46492 / JCM 5070 / NBRC 14893 / NCIMB 12804 / NRRL 8165 / MA-4680).